Consider the following 2393-residue polypeptide: Leucine-rich repeat serine/threonine-protein kinase 1 (2393 aa).

ANK repeat units follow at residues His56–Leu86, Arg90–Ser120, Glu123–Glu152, Glu197–Gln226, Ser230–Lys259, Glu264–Phe293, Glu317–Gly347, Arg361–Leu390, Ile407–Asn437, and Ala439–Pro464. 5 LRR repeats span residues Ala532–Met553, Ser555–Ile576, Ser580–Ser600, Gln604–Cys625, and Ala627–Ser648. The disordered stretch occupies residues Arg649 to Val675. LRR repeat units follow at residues Thr718–Thr739, Arg742–Pro763, and His765–His787. The disordered stretch occupies residues Thr797 to Glu844. Positions Pro804–Ser820 are enriched in basic residues. The segment covering Ala821 to Val830 has biased composition (polar residues). Over residues Ala835–Glu844 the composition is skewed to basic and acidic residues. 4 LRR repeats span residues Trp856 to Ser877, Ala883 to Thr905, Leu906 to Leu928, and Arg930 to Glu952. Residues Glu969–Val1167 enclose the Roc domain. GTP is bound by residues Gly982–Ser989, Asp1040–Gln1044, and Thr1098–Asp1101. The 190-residue stretch at Phe1233–Ile1422 folds into the COR domain. Disordered stretches follow at residues Cys1361 to Asn1382 and Arg1596 to Gly1633. 2 stretches are compositionally biased toward polar residues: residues Gly1366–Asn1382 and Ile1620–Gly1633. The 299-residue stretch at Leu1694–Phe1992 folds into the Protein kinase domain. ATP is bound by residues Leu1700–Val1708 and Lys1726. The active-site Proton acceptor is Asp1847.

The protein belongs to the protein kinase superfamily. TKL Ser/Thr protein kinase family. ROCO subfamily. The cofactor is Mg(2+). Mn(2+) is required as a cofactor. Expressed in cell bodies, but not in dendritic or axonal processes, of adult head neurons. Also present in non-neuronal tissues, such as the body wall musculature and the epithelial cells of the nematode vulva.

The protein resides in the golgi apparatus. It catalyses the reaction L-seryl-[protein] + ATP = O-phospho-L-seryl-[protein] + ADP + H(+). The catalysed reaction is L-threonyl-[protein] + ATP = O-phospho-L-threonyl-[protein] + ADP + H(+). Functionally, determines polarized sorting of synaptic vesicle (SV) proteins to the axons by excluding SV proteins from the dendrite-specific transport machinery in the Golgi. Role in stress response. Appears to antagonize the effects of pink-1 both in the regulation of axon guidance and stress response. This is Leucine-rich repeat serine/threonine-protein kinase 1 (lrk-1) from Caenorhabditis elegans.